Reading from the N-terminus, the 521-residue chain is Acetyl-CoA hydrolase (521 aa).

276 to 280 (GIGNI) lines the CoA pocket. E301 serves as the catalytic 5-glutamyl coenzyme A thioester intermediate. N391 and G395 together coordinate CoA.

It belongs to the acetyl-CoA hydrolase/transferase family.

The protein localises to the cytoplasm. The catalysed reaction is acetyl-CoA + H2O = acetate + CoA + H(+). In terms of biological role, presumably involved in regulating the intracellular acetyl-CoA pool for fatty acid and cholesterol synthesis and fatty acid oxidation. The protein is Acetyl-CoA hydrolase (ach1) of Schizosaccharomyces pombe (strain 972 / ATCC 24843) (Fission yeast).